The sequence spans 382 residues: Lipid-A-disaccharide synthase (382 aa).

This sequence belongs to the LpxB family.

The catalysed reaction is 2-N,3-O-bis[(3R)-3-hydroxytetradecanoyl]-alpha-D-glucosaminyl 1-phosphate + UDP-2-N,3-O-bis[(3R)-3-hydroxytetradecanoyl]-alpha-D-glucosamine = lipid A disaccharide (E. coli) + UDP + H(+). The enzyme catalyses a lipid X + a UDP-2-N,3-O-bis[(3R)-3-hydroxyacyl]-alpha-D-glucosamine = a lipid A disaccharide + UDP + H(+). It functions in the pathway glycolipid biosynthesis; lipid IV(A) biosynthesis; lipid IV(A) from (3R)-3-hydroxytetradecanoyl-[acyl-carrier-protein] and UDP-N-acetyl-alpha-D-glucosamine: step 5/6. Functionally, condensation of UDP-2,3-diacylglucosamine and 2,3-diacylglucosamine-1-phosphate to form lipid A disaccharide, a precursor of lipid A, a phosphorylated glycolipid that anchors the lipopolysaccharide to the outer membrane of the cell. The polypeptide is Lipid-A-disaccharide synthase (Escherichia coli (strain K12 / MC4100 / BW2952)).